The primary structure comprises 182 residues: NADH-quinone oxidoreductase subunit I (182 aa).

4Fe-4S ferredoxin-type domains are found at residues 52 to 82 (LTRD…LQKA) and 92 to 121 (EFFR…LTPD). [4Fe-4S] cluster is bound by residues Cys-62, Cys-65, Cys-68, Cys-72, Cys-101, Cys-104, Cys-107, and Cys-111.

Belongs to the complex I 23 kDa subunit family. In terms of assembly, NDH-1 is composed of 13 different subunits. Subunits NuoA, H, J, K, L, M, N constitute the membrane sector of the complex. The cofactor is [4Fe-4S] cluster.

The protein localises to the cell inner membrane. It carries out the reaction a quinone + NADH + 5 H(+)(in) = a quinol + NAD(+) + 4 H(+)(out). Its function is as follows. NDH-1 shuttles electrons from NADH, via FMN and iron-sulfur (Fe-S) centers, to quinones in the respiratory chain. The immediate electron acceptor for the enzyme in this species is believed to be ubiquinone. Couples the redox reaction to proton translocation (for every two electrons transferred, four hydrogen ions are translocated across the cytoplasmic membrane), and thus conserves the redox energy in a proton gradient. In Pseudomonas entomophila (strain L48), this protein is NADH-quinone oxidoreductase subunit I.